We begin with the raw amino-acid sequence, 140 residues long: Large ribosomal subunit protein uL16 (140 aa).

The interval 1 to 24 is disordered; the sequence is MALAPARTKYRKSQKGSRAGNAKR.

It belongs to the universal ribosomal protein uL16 family. As to quaternary structure, part of the 50S ribosomal subunit.

In terms of biological role, binds 23S rRNA and is also seen to make contacts with the A and possibly P site tRNAs. The sequence is that of Large ribosomal subunit protein uL16 from Opitutus terrae (strain DSM 11246 / JCM 15787 / PB90-1).